We begin with the raw amino-acid sequence, 1019 residues long: Enteropeptidase (1019 aa).

Residue Gly2 is the site of N-myristoyl glycine attachment. Topologically, residues 2–18 are cytoplasmic; that stretch reads GSKRGISSRHHSLSSYE. Residues 19 to 47 form a helical; Signal-anchor for type II membrane protein membrane-spanning segment; sequence IMFAALFAILVVLCAGLIAVSCLTIKESQ. Residues 48–1019 are Extracellular-facing; that stretch reads RGAALGQSHE…FTEWIQSFLH (972 aa). The SEA domain occupies 54-169; that stretch reads QSHEARATFK…NSVDILDKLT (116 aa). Residues Asn116, Asn147, and Asn179 are each glycosylated (N-linked (GlcNAc...) asparagine). One can recognise an LDL-receptor class A 1 domain in the interval 182–223; the sequence is IECLPGSSPCTDALTCIKADLFCDGEVNCPDGSDEDNKMCAT. Cystine bridges form between Cys184-Cys197, Cys191-Cys210, Cys204-Cys221, and Cys225-Cys253. The CUB 1 domain maps to 225–334; it reads CDGRFLLTGS…VGFNATYTAF (110 aa). Asn328, Asn335, Asn388, Asn440, Asn470, Asn503, Asn534, and Asn630 each carry an N-linked (GlcNAc...) asparagine glycan. The MAM domain occupies 342 to 504; it reads YEKINCNFED…ISLTYGICNG (163 aa). Cys524 and Cys552 are joined by a disulfide. One can recognise a CUB 2 domain in the interval 524-634; the sequence is CGGPFELWEP…GGFKANFTTG (111 aa). An LDL-receptor class A 2 domain is found at 641-679; it reads EPCKADHFQCKNGECVPLVNLCDGHLHCEDGSDEADCVR. Intrachain disulfides connect Cys643–Cys655, Cys650–Cys668, and Cys662–Cys677. The region spanning 678 to 771 is the SRCR domain; sequence VRFFNGTTNN…LIRLQCNHKS (94 aa). Residues Asn682, Asn706, and Asn725 are each glycosylated (N-linked (GlcNAc...) asparagine). Cystine bridges form between Cys757–Cys767, Cys772–Cys896, and Cys810–Cys826. A Peptidase S1 domain is found at 785-1019; the sequence is IVGGSNAKEG…FTEWIQSFLH (235 aa). Catalysis depends on His825, which acts as the Charge relay system. A glycan (N-linked (GlcNAc...) asparagine) is linked at Asn848. Residue Asp876 is the Charge relay system of the active site. Asn887, Asn909, and Asn949 each carry an N-linked (GlcNAc...) asparagine glycan. Disulfide bonds link Cys910-Cys977, Cys941-Cys956, and Cys967-Cys995. The active-site Charge relay system is Ser971.

This sequence belongs to the peptidase S1 family. As to quaternary structure, heterodimer of a catalytic (light) chain and a multidomain (heavy) chain linked by a disulfide bond. Post-translationally, the chains are derived from a single precursor that is cleaved by a trypsin-like protease. Intestinal brush border.

It is found in the membrane. The enzyme catalyses Activation of trypsinogen by selective cleavage of 6-Lys-|-Ile-7 bond.. In terms of biological role, responsible for initiating activation of pancreatic proteolytic proenzymes (trypsin, chymotrypsin and carboxypeptidase A). It catalyzes the conversion of trypsinogen to trypsin which in turn activates other proenzymes including chymotrypsinogen, procarboxypeptidases, and proelastases. This chain is Enteropeptidase (TMPRSS15), found in Homo sapiens (Human).